A 341-amino-acid chain; its full sequence is L-threonine 3-dehydrogenase (341 aa).

Cys-38 provides a ligand contact to Zn(2+). Catalysis depends on charge relay system residues Thr-40 and His-43. The Zn(2+) site is built by His-63, Glu-64, Cys-93, Cys-96, Cys-99, and Cys-107. Residues Ile-175, Asp-195, Arg-200, 262–264, and 286–287 contribute to the NAD(+) site; these read LGI and IY.

Belongs to the zinc-containing alcohol dehydrogenase family. Homotetramer. It depends on Zn(2+) as a cofactor.

It is found in the cytoplasm. The catalysed reaction is L-threonine + NAD(+) = (2S)-2-amino-3-oxobutanoate + NADH + H(+). Its pathway is amino-acid degradation; L-threonine degradation via oxydo-reductase pathway; glycine from L-threonine: step 1/2. Functionally, catalyzes the NAD(+)-dependent oxidation of L-threonine to 2-amino-3-ketobutyrate. In Photorhabdus laumondii subsp. laumondii (strain DSM 15139 / CIP 105565 / TT01) (Photorhabdus luminescens subsp. laumondii), this protein is L-threonine 3-dehydrogenase.